A 264-amino-acid polypeptide reads, in one-letter code: Thymidylate synthase (264 aa).

Arginine 21 provides a ligand contact to dUMP. Histidine 51 contacts (6R)-5,10-methylene-5,6,7,8-tetrahydrofolate. 126–127 (RR) is a dUMP binding site. Cysteine 146 (nucleophile) is an active-site residue. Residues 166-169 (RSCD), asparagine 177, and 207-209 (HLY) each bind dUMP. Aspartate 169 contacts (6R)-5,10-methylene-5,6,7,8-tetrahydrofolate. A (6R)-5,10-methylene-5,6,7,8-tetrahydrofolate-binding site is contributed by alanine 263.

The protein belongs to the thymidylate synthase family. Bacterial-type ThyA subfamily. Homodimer.

The protein resides in the cytoplasm. It carries out the reaction dUMP + (6R)-5,10-methylene-5,6,7,8-tetrahydrofolate = 7,8-dihydrofolate + dTMP. It functions in the pathway pyrimidine metabolism; dTTP biosynthesis. Catalyzes the reductive methylation of 2'-deoxyuridine-5'-monophosphate (dUMP) to 2'-deoxythymidine-5'-monophosphate (dTMP) while utilizing 5,10-methylenetetrahydrofolate (mTHF) as the methyl donor and reductant in the reaction, yielding dihydrofolate (DHF) as a by-product. This enzymatic reaction provides an intracellular de novo source of dTMP, an essential precursor for DNA biosynthesis. This Cronobacter sakazakii (strain ATCC BAA-894) (Enterobacter sakazakii) protein is Thymidylate synthase.